The sequence spans 170 residues: NADH-quinone oxidoreductase subunit J (170 aa).

The next 5 helical transmembrane spans lie at 1 to 21 (MEFV…FVII), 30 to 50 (VYLI…GAFF), 56 to 76 (VIIY…MLNI), 94 to 114 (IGPS…IFFL), and 138 to 158 (VFLV…IFHI).

It belongs to the complex I subunit 6 family. Composed of 13 different subunits. Subunits NuoA, H, J, K, L, M, N constitute the membrane sector of the complex.

It is found in the cell membrane. The enzyme catalyses a quinone + NADH + 5 H(+)(in) = a quinol + NAD(+) + 4 H(+)(out). Functionally, NDH-1 shuttles electrons from NADH, via FMN and iron-sulfur (Fe-S) centers, to quinones in the respiratory chain. Couples the redox reaction to proton translocation (for every two electrons transferred, four hydrogen ions are translocated across the cytoplasmic membrane), and thus conserves the redox energy in a proton gradient. This chain is NADH-quinone oxidoreductase subunit J (nuoJ), found in Buchnera aphidicola subsp. Acyrthosiphon pisum (strain APS) (Acyrthosiphon pisum symbiotic bacterium).